Here is a 370-residue protein sequence, read N- to C-terminus: Galactose-1-phosphate uridylyltransferase (370 aa).

2 residues coordinate Zn(2+): C51 and C54. Residues A60 and 76-77 (NG) each bind UDP-alpha-D-glucose. H121 lines the Zn(2+) pocket. N166 contributes to the UDP-alpha-D-glucose binding site. Position 177 (H177) interacts with Zn(2+). The active-site Tele-UMP-histidine intermediate is H179. Residue Q181 coordinates UDP-alpha-D-glucose. Fe cation contacts are provided by E195, H294, H311, and H313. UDP-alpha-D-glucose-binding positions include 326-329 (KFLV) and 331-332 (FE).

It belongs to the galactose-1-phosphate uridylyltransferase type 1 family. As to quaternary structure, homodimer. The cofactor is Zn(2+).

The enzyme catalyses alpha-D-galactose 1-phosphate + UDP-alpha-D-glucose = alpha-D-glucose 1-phosphate + UDP-alpha-D-galactose. It participates in carbohydrate metabolism; galactose metabolism. In Kluyveromyces lactis (strain ATCC 8585 / CBS 2359 / DSM 70799 / NBRC 1267 / NRRL Y-1140 / WM37) (Yeast), this protein is Galactose-1-phosphate uridylyltransferase (GAL7).